The sequence spans 287 residues: MKIDVEVIKELRQITGAGIGDCKEALESCSGDMDKAREYLREKGLSKAYKKSHRDVADGLVAVFAEGDVGAILKLGSETDFVARNEKFRSLALGLVRGLYGYGVEDLEGFSASSYDGSRVADEIVAAAAVLGENVVLSGVGFVKLSGPGVIGSYVHGMVSEGLGKAAALVVLEGGPHSDELASFAKQLAMHIVAAKPEALSIDTLSSDVVDRERELVARQVEALGKPDSVAQKIIEGRMQKFFEEMVLLEQVFVMDGQTKIRDLLVQKGQSLKHEIRIAAYRLFAIA.

Positions 79–82 (TDFV) are involved in Mg(2+) ion dislocation from EF-Tu.

Belongs to the EF-Ts family.

It localises to the cytoplasm. Functionally, associates with the EF-Tu.GDP complex and induces the exchange of GDP to GTP. It remains bound to the aminoacyl-tRNA.EF-Tu.GTP complex up to the GTP hydrolysis stage on the ribosome. The protein is Elongation factor Ts of Anaplasma phagocytophilum (strain HZ).